A 155-amino-acid polypeptide reads, in one-letter code: Protein E6 (155 aa).

Zinc fingers lie at residues 33–69 and 106–142; these read CVYCKKELTSLELYRFACIELKLVYRNNWPYAVCRVC and CYRCQCPLTPEEKQLHCEHKRRFHYIAYAWTGSCLQC.

Belongs to the papillomaviridae E6 protein family. As to quaternary structure, forms homodimers. Interacts with ubiquitin-protein ligase UBE3A/E6-AP; this interaction stimulates UBE3A ubiquitin activity. Interacts with host TP53 and EP300; this interaction inhibits TP53 activity.

It localises to the host cytoplasm. The protein resides in the host nucleus. Plays a major role in the induction and maintenance of cellular transformation. E6 associates with host UBE3A/E6-AP ubiquitin-protein ligase and modulates its activity. Sequesters tumor suppressor TP53 in the host cytoplasm and modulates its activity by interacting with host EP300 that results in the reduction of TP53 acetylation and activation. In turn, apoptosis induced by DNA damage is inhibited. E6 also protects host keratinocytes from apoptosis by mediating the degradation of host BAK1. May also inhibit host immune response. This Homo sapiens (Human) protein is Protein E6.